Consider the following 149-residue polypeptide: Aspartate 1-decarboxylase (149 aa).

Residue Ser-25 is the Schiff-base intermediate with substrate; via pyruvic acid of the active site. Position 25 is a pyruvic acid (Ser) (Ser-25). Thr-57 serves as a coordination point for substrate. The Proton donor role is filled by Tyr-58. 73 to 75 provides a ligand contact to substrate; that stretch reads GAA. A disordered region spans residues 119 to 149; the sequence is GDPAAALPGDPSSLRGDVLDPAGARGLGGGA.

Belongs to the PanD family. As to quaternary structure, heterooctamer of four alpha and four beta subunits. Pyruvate is required as a cofactor. In terms of processing, is synthesized initially as an inactive proenzyme, which is activated by self-cleavage at a specific serine bond to produce a beta-subunit with a hydroxyl group at its C-terminus and an alpha-subunit with a pyruvoyl group at its N-terminus.

It localises to the cytoplasm. It carries out the reaction L-aspartate + H(+) = beta-alanine + CO2. It functions in the pathway cofactor biosynthesis; (R)-pantothenate biosynthesis; beta-alanine from L-aspartate: step 1/1. Functionally, catalyzes the pyruvoyl-dependent decarboxylation of aspartate to produce beta-alanine. This chain is Aspartate 1-decarboxylase, found in Parafrankia sp. (strain EAN1pec).